Here is a 201-residue protein sequence, read N- to C-terminus: Sterile alpha motif domain-containing protein 12 (201 aa).

Positions W77–R143 constitute an SAM domain.

The protein is Sterile alpha motif domain-containing protein 12 (SAMD12) of Pongo abelii (Sumatran orangutan).